The primary structure comprises 173 residues: Photosystem I assembly protein Ycf3 (173 aa).

3 TPR repeats span residues 35 to 68 (AFYYYKDGMAAQSEGEYAEALACYYQALKIEKDP), 72 to 105 (SFILYNIGLIQASNGQHARALEYYHESLKFNPNL), and 120 to 153 (GNKLFEQSKLQEAKLMFDKASNYWRKAIKLAPYN).

It belongs to the Ycf3 family.

The protein localises to the plastid. It localises to the chloroplast thylakoid membrane. Functionally, essential for the assembly of the photosystem I (PSI) complex. May act as a chaperone-like factor to guide the assembly of the PSI subunits. The sequence is that of Photosystem I assembly protein Ycf3 from Cyanidium caldarium (Red alga).